Here is a 436-residue protein sequence, read N- to C-terminus: MNEISIIILAAGNGTRMKSNKSKVLHTLCGEPMISHILKKSYEISNDVRIVLSYQFEEVKNSVLSEFKDVKIYKQDTINRPGTAGAAEAALENLNSKKTLVICGDMPLVEVNELKSLCDNTADISLSAFRAKNPFGYGRVVLNQQNVIKIVEQKDANDDEKKIDLCNAGAYCFDTNLLKNIIPLIKNENASREFYLTDAIELALKQGFMVKSVLVDETNFMGINDKFALSIAEEIMQNRIKENLMKNGVIMSLPDTIFIDSRAEFEGECKLEPNVVILGNSFIKNSHIKSGSVIEFSEVCDSDIGPMAHLRPNSKIYKTHIGNFVELKNASLNEVKAGHLSYLGDCEINSGTNIGCGTITCNYDGKKKHKTIIGKNVFIGSDTQLVAPVNVADDTLIAAGSTVTKDTNKGDLVITRGKQINKAGYFYKFFGKNDEK.

Residues 1 to 226 (MNEISIIILA…ETNFMGINDK (226 aa)) are pyrophosphorylase. Residues 9–12 (LAAG), K23, Q75, and 82–83 (GT) contribute to the UDP-N-acetyl-alpha-D-glucosamine site. Residue D105 coordinates Mg(2+). 4 residues coordinate UDP-N-acetyl-alpha-D-glucosamine: G138, E152, N167, and N224. Position 224 (N224) interacts with Mg(2+). The linker stretch occupies residues 227-247 (FALSIAEEIMQNRIKENLMKN). The N-acetyltransferase stretch occupies residues 248–436 (GVIMSLPDTI…YKFFGKNDEK (189 aa)). UDP-N-acetyl-alpha-D-glucosamine-binding residues include R311 and K328. H339 acts as the Proton acceptor in catalysis. UDP-N-acetyl-alpha-D-glucosamine contacts are provided by Y342 and N353. Acetyl-CoA-binding positions include 362–363 (NY), S381, A399, and R416.

The protein in the N-terminal section; belongs to the N-acetylglucosamine-1-phosphate uridyltransferase family. It in the C-terminal section; belongs to the transferase hexapeptide repeat family. As to quaternary structure, homotrimer. The cofactor is Mg(2+).

It is found in the cytoplasm. The enzyme catalyses alpha-D-glucosamine 1-phosphate + acetyl-CoA = N-acetyl-alpha-D-glucosamine 1-phosphate + CoA + H(+). It carries out the reaction N-acetyl-alpha-D-glucosamine 1-phosphate + UTP + H(+) = UDP-N-acetyl-alpha-D-glucosamine + diphosphate. Its pathway is nucleotide-sugar biosynthesis; UDP-N-acetyl-alpha-D-glucosamine biosynthesis; N-acetyl-alpha-D-glucosamine 1-phosphate from alpha-D-glucosamine 6-phosphate (route II): step 2/2. The protein operates within nucleotide-sugar biosynthesis; UDP-N-acetyl-alpha-D-glucosamine biosynthesis; UDP-N-acetyl-alpha-D-glucosamine from N-acetyl-alpha-D-glucosamine 1-phosphate: step 1/1. It participates in bacterial outer membrane biogenesis; LPS lipid A biosynthesis. Catalyzes the last two sequential reactions in the de novo biosynthetic pathway for UDP-N-acetylglucosamine (UDP-GlcNAc). The C-terminal domain catalyzes the transfer of acetyl group from acetyl coenzyme A to glucosamine-1-phosphate (GlcN-1-P) to produce N-acetylglucosamine-1-phosphate (GlcNAc-1-P), which is converted into UDP-GlcNAc by the transfer of uridine 5-monophosphate (from uridine 5-triphosphate), a reaction catalyzed by the N-terminal domain. This chain is Bifunctional protein GlmU, found in Campylobacter fetus subsp. fetus (strain 82-40).